The primary structure comprises 95 residues: Transcription and mRNA export factor ENY2-2 (95 aa).

This sequence belongs to the ENY2 family. Component of the nuclear pore complex (NPC)-associated TREX-2 complex (transcription and export complex 2). Component of the SAGA transcription coactivator-HAT complex. Within the SAGA complex, participates in a subcomplex of SAGA called the DUB module (deubiquitination module).

It localises to the nucleus. The protein resides in the nucleoplasm. Functionally, involved in mRNA export coupled transcription activation by association with both the TREX-2 and the SAGA complexes. The transcription regulatory histone acetylation (HAT) complex SAGA is a multiprotein complex that activates transcription by remodeling chromatin and mediating histone acetylation and deubiquitination. Within the SAGA complex, participates in a subcomplex that specifically deubiquitinates histones. The SAGA complex is recruited to specific gene promoters by activators, where it is required for transcription. The TREX-2 complex functions in docking export-competent ribonucleoprotein particles (mRNPs) to the nuclear entrance of the nuclear pore complex (nuclear basket). TREX-2 participates in mRNA export and accurate chromatin positioning in the nucleus by tethering genes to the nuclear periphery. This Salmo salar (Atlantic salmon) protein is Transcription and mRNA export factor ENY2-2 (eny2-2).